Here is a 386-residue protein sequence, read N- to C-terminus: MEHDLERGPPGPRRPPRGPPLSSSLGLALLLLLLALLFWLYIVMSDWTGGALLVLYSFALMLIIIILIIFIFRRDLLCPLGALCILLLMITLLLIALWNLHGQALFLGIVLFIFGCLLVLGIWIYLLEMLWRLGATIWQLLAFFLAFFLDLILLIIALYLQQNWWTLLVDLLWLLLFLAILIWMYYHGQRHSDEHHHDDSLPHPQQATDDSGHESDSNSNEGRHHLLVSGAGDGPPLCSQNLGAPGGGPDNGPQDPDNTDDNGPQDPDNTDDNGPHDPLPQDPDNTDDNGPQDPDNTDDNGPHDPLPHSPSDSAGNDGGPPQLTEEVENKGGDQGPPLMTDGGGGHSHDSGHGGGDPHLPTLLLGSSGSGGDDDDPHGPVQLSYYD.

Topologically, residues 1-23 (MEHDLERGPPGPRRPPRGPPLSS) are cytoplasmic. Residues 24–44 (SLGLALLLLLLALLFWLYIVM) traverse the membrane as a helical segment. The Extracellular segment spans residues 45–51 (SDWTGGA). Residues 52–72 (LLVLYSFALMLIIIILIIFIF) traverse the membrane as a helical segment. The Cytoplasmic portion of the chain corresponds to 73–75 (RRD). A helical transmembrane segment spans residues 76 to 96 (LLCPLGALCILLLMITLLLIA). Residues 97–106 (LWNLHGQALF) are Extracellular-facing. A helical membrane pass occupies residues 107–127 (LGIVLFIFGCLLVLGIWIYLL). At 128-139 (EMLWRLGATIWQ) the chain is on the cytoplasmic side. A helical membrane pass occupies residues 140–160 (LLAFFLAFFLDLILLIIALYL). At 161–163 (QQN) the chain is on the extracellular side. Residues 164–184 (WWTLLVDLLWLLLFLAILIWM) traverse the membrane as a helical segment. Residues 185-386 (YYHGQRHSDE…HGPVQLSYYD (202 aa)) lie on the Cytoplasmic side of the membrane. A CTAR1 region spans residues 194–232 (EHHHDDSLPHPQQATDDSGHESDSNSNEGRHHLLVSGAG). The tract at residues 194-386 (EHHHDDSLPH…HGPVQLSYYD (193 aa)) is disordered. The Interaction with host TRAF proteins motif lies at 204–208 (PQQAT). The span at 210–224 (DSGHESDSNSNEGRH) shows a compositional bias: basic and acidic residues. Low complexity predominate over residues 251-267 (NGPQDPDNTDDNGPQDP). The tract at residues 351 to 386 (GHGGGDPHLPTLLLGSSGSGGDDDDPHGPVQLSYYD) is CTAR2.

It belongs to the herpesviridae LMP-1 family. As to quaternary structure, interacts (via PXQXT motif) with host tumor necrosis factor receptor-associated factor (TRAF) proteins TRAF1, TRAF2, TRAF3 and TRAF5. Interacts with human protein ZMYND11; leading to negatively regulate NF-kappa-B activation. Interacts with host UBE2I; this interaction induces the sumoylation of various cellular proteins. Interacts with host IRF7. Interacts with host TYK2. Post-translationally, ubiquitinated on the N-terminus.

Its subcellular location is the host cell membrane. Its function is as follows. Acts as a CD40 functional homolog to prevent apoptosis of infected B-lymphocytes and drive their proliferation. Functions as a constitutively active tumor necrosis factor receptor that induces the activation of several signaling pathways, including those of the NF-kappa-B family. LMP1 signaling leads to up-regulation of antiapoptotic proteins and provide growth signals in latently infected cells. Interacts with host UBE2I and subsequently affects the sumoylation state of several cellular proteins. For example, induces the sumoylation of host IRF7 thereby limiting its transcriptional activity and modulating the activation of innate immune responses. Also inhibits host IFN-alpha-stimulated STAT2 nuclear translocation and interferon-stimulated response element transcriptional activity by interacting with and inhibiting host TYK2. Induces SUMO expression during viral latency thereby dysregulating the host sumoylation processes. The sequence is that of Latent membrane protein 1 (LMP1) from Epstein-Barr virus (strain B95-8) (HHV-4).